A 298-amino-acid polypeptide reads, in one-letter code: Small ribosomal subunit protein uS2 (298 aa).

Composition is skewed to basic and acidic residues over residues 237-259 (QSKE…DGQK) and 280-298 (PKSE…ENKG). Residues 237 to 298 (QSKELDDKAD…DAAKLPENKG (62 aa)) are disordered.

Belongs to the universal ribosomal protein uS2 family.

The polypeptide is Small ribosomal subunit protein uS2 (Neorickettsia sennetsu (strain ATCC VR-367 / Miyayama) (Ehrlichia sennetsu)).